The chain runs to 114 residues: uncharacterized protein (114 aa).

The tract at residues 1-24 (MFGACYKQPLKPSGSEPPAEECRM) is disordered.

In terms of tissue distribution, expressed in kidney and liver.

This is an uncharacterized protein from Homo sapiens (Human).